We begin with the raw amino-acid sequence, 403 residues long: S-adenosylmethionine synthase (403 aa).

His-15 lines the ATP pocket. Asp-17 provides a ligand contact to Mg(2+). Glu-43 is a binding site for K(+). L-methionine contacts are provided by Glu-56 and Gln-99. Residues 99 to 109 form a flexible loop region; the sequence is QSPDINQGVDR. Residues 166–168, 232–233, Asp-241, 247–248, Ala-264, and Lys-268 contribute to the ATP site; these read DAK, KF, and RK. Position 241 (Asp-241) interacts with L-methionine. Lys-272 is a binding site for L-methionine.

Belongs to the AdoMet synthase family. Homotetramer; dimer of dimers. The cofactor is Mg(2+). K(+) is required as a cofactor.

Its subcellular location is the cytoplasm. The enzyme catalyses L-methionine + ATP + H2O = S-adenosyl-L-methionine + phosphate + diphosphate. Its pathway is amino-acid biosynthesis; S-adenosyl-L-methionine biosynthesis; S-adenosyl-L-methionine from L-methionine: step 1/1. Functionally, catalyzes the formation of S-adenosylmethionine (AdoMet) from methionine and ATP. The overall synthetic reaction is composed of two sequential steps, AdoMet formation and the subsequent tripolyphosphate hydrolysis which occurs prior to release of AdoMet from the enzyme. The chain is S-adenosylmethionine synthase from Xanthomonas campestris pv. campestris (strain 8004).